A 288-amino-acid polypeptide reads, in one-letter code: Small ribosomal subunit protein uS3 (288 aa).

The KH type-2 domain occupies 38–106 (IRRMMSKGLE…QVQLNIIEVK (69 aa)). Residues 209–288 (PGRETPAEAP…TQPAETQQEG (80 aa)) form a disordered region. A compositionally biased stretch (basic and acidic residues) spans 219–232 (SRPRRERGDRSERP). Positions 249–264 (AGRAAATTIAQAAETP) are enriched in low complexity. The span at 277 to 288 (AATQPAETQQEG) shows a compositional bias: polar residues.

The protein belongs to the universal ribosomal protein uS3 family. In terms of assembly, part of the 30S ribosomal subunit. Forms a tight complex with proteins S10 and S14.

In terms of biological role, binds the lower part of the 30S subunit head. Binds mRNA in the 70S ribosome, positioning it for translation. The sequence is that of Small ribosomal subunit protein uS3 from Salinispora arenicola (strain CNS-205).